Reading from the N-terminus, the 80-residue chain is Cell division protein ZapB (80 aa).

Residues 3-80 are a coiled coil; the sequence is FEVFEKLESK…ALLGKMEDVQ (78 aa).

This sequence belongs to the ZapB family. Homodimer. The ends of the coiled-coil dimer bind to each other, forming polymers. Interacts with FtsZ.

It is found in the cytoplasm. Functionally, non-essential, abundant cell division factor that is required for proper Z-ring formation. It is recruited early to the divisome by direct interaction with FtsZ, stimulating Z-ring assembly and thereby promoting cell division earlier in the cell cycle. Its recruitment to the Z-ring requires functional FtsA or ZipA. The chain is Cell division protein ZapB from Proteus mirabilis (strain HI4320).